The primary structure comprises 266 residues: uncharacterized protein (266 aa).

This is an uncharacterized protein from Acanthamoeba polyphaga (Amoeba).